The chain runs to 584 residues: UvrABC system protein C (584 aa).

Residues 14-91 form the GIY-YIG domain; that stretch reads HKPGCYLWKD…IKTHLPKYNI (78 aa). The 36-residue stretch at 192 to 227 folds into the UVR domain; it reads DHILMILQTKEQHAVTKLDFENAQKYAEQQKALTSI.

The protein belongs to the UvrC family. In terms of assembly, interacts with UvrB in an incision complex.

It localises to the cytoplasm. Its function is as follows. The UvrABC repair system catalyzes the recognition and processing of DNA lesions. UvrC both incises the 5' and 3' sides of the lesion. The N-terminal half is responsible for the 3' incision and the C-terminal half is responsible for the 5' incision. This Ureaplasma parvum serovar 3 (strain ATCC 27815 / 27 / NCTC 11736) protein is UvrABC system protein C.